A 175-amino-acid polypeptide reads, in one-letter code: Crossover junction endodeoxyribonuclease RuvC (175 aa).

Active-site residues include Asp16, Glu76, and Asp148. Positions 16, 76, and 148 each coordinate Mg(2+).

Belongs to the RuvC family. As to quaternary structure, homodimer which binds Holliday junction (HJ) DNA. The HJ becomes 2-fold symmetrical on binding to RuvC with unstacked arms; it has a different conformation from HJ DNA in complex with RuvA. In the full resolvosome a probable DNA-RuvA(4)-RuvB(12)-RuvC(2) complex forms which resolves the HJ. Mg(2+) is required as a cofactor.

The protein resides in the cytoplasm. The catalysed reaction is Endonucleolytic cleavage at a junction such as a reciprocal single-stranded crossover between two homologous DNA duplexes (Holliday junction).. Functionally, the RuvA-RuvB-RuvC complex processes Holliday junction (HJ) DNA during genetic recombination and DNA repair. Endonuclease that resolves HJ intermediates. Cleaves cruciform DNA by making single-stranded nicks across the HJ at symmetrical positions within the homologous arms, yielding a 5'-phosphate and a 3'-hydroxyl group; requires a central core of homology in the junction. The consensus cleavage sequence is 5'-(A/T)TT(C/G)-3'. Cleavage occurs on the 3'-side of the TT dinucleotide at the point of strand exchange. HJ branch migration catalyzed by RuvA-RuvB allows RuvC to scan DNA until it finds its consensus sequence, where it cleaves and resolves the cruciform DNA. The polypeptide is Crossover junction endodeoxyribonuclease RuvC (Bradyrhizobium sp. (strain BTAi1 / ATCC BAA-1182)).